Consider the following 313-residue polypeptide: Ribosomal RNA small subunit methyltransferase H (313 aa).

S-adenosyl-L-methionine is bound by residues 35–37 (GGH), Asp-55, Phe-79, Asp-100, and Gln-107.

It belongs to the methyltransferase superfamily. RsmH family.

Its subcellular location is the cytoplasm. It carries out the reaction cytidine(1402) in 16S rRNA + S-adenosyl-L-methionine = N(4)-methylcytidine(1402) in 16S rRNA + S-adenosyl-L-homocysteine + H(+). Functionally, specifically methylates the N4 position of cytidine in position 1402 (C1402) of 16S rRNA. The polypeptide is Ribosomal RNA small subunit methyltransferase H (Burkholderia orbicola (strain AU 1054)).